A 211-amino-acid polypeptide reads, in one-letter code: MISYYFQGLALGAAMILPLGPQNAFVMNQGIRRQYHLMIALLCALSDLVLISAGIFGGSALLMQSPWLLALVTWGGVAFLLWYGFGALKTAMSSNLELASAEVMKQGRWKIIATMLAVTWLNPHVYLDTFVVLGSLGGQLAMEPKRWFALGTISASFLWFFGLALLAAWLAPRLRTAKAQRIINILVGVVMWLIAFQLAREGVAHMHALFN.

6 consecutive transmembrane segments (helical) span residues 1-21 (MISY…PLGP), 37-57 (LMIA…GIFG), 68-88 (LLAL…FGAL), 111-131 (IIAT…DTFV), 147-167 (WFAL…ALLA), and 179-199 (AQRI…FQLA).

It belongs to the LysE/ArgO transporter (TC 2.A.75) family.

The protein resides in the cell inner membrane. The enzyme catalyses L-arginine(in) = L-arginine(out). In terms of biological role, involved in the export of arginine. Important to control the intracellular level of arginine and the correct balance between arginine and lysine. The sequence is that of Arginine exporter protein ArgO from Salmonella schwarzengrund (strain CVM19633).